A 436-amino-acid chain; its full sequence is Eukaryotic translation initiation factor 5 (436 aa).

Residue 27 to 34 (GKGNGIKT) participates in GTP binding. Residues 177–203 (NSDKGSSNDDDDDDWEPEPVEPNGMLS) form a disordered region. A compositionally biased stretch (acidic residues) spans 184 to 195 (NDDDDDDWEPEP). A W2 domain is found at 216-379 (EKSEEQRLDM…KEAEEETEEE (164 aa)). Basic and acidic residues predominate over residues 396–408 (LRQQKEKAAREAQ). The segment at 396–436 (LRQQKEKAAREAQQKSAKATNGNAAAASGANDEEDLDIDDI) is disordered. The span at 409–425 (QKSAKATNGNAAAASGA) shows a compositional bias: low complexity. Over residues 426–436 (NDEEDLDIDDI) the composition is skewed to acidic residues.

It belongs to the eIF-2-beta/eIF-5 family.

Its function is as follows. Catalyzes the hydrolysis of GTP bound to the 40S ribosomal initiation complex (40S.mRNA.Met-tRNA[F].eIF-2.GTP) with the subsequent joining of a 60S ribosomal subunit resulting in the release of eIF-2 and the guanine nucleotide. The subsequent joining of a 60S ribosomal subunit results in the formation of a functional 80S initiation complex (80S.mRNA.Met-tRNA[F]). The polypeptide is Eukaryotic translation initiation factor 5 (Caenorhabditis elegans).